A 445-amino-acid polypeptide reads, in one-letter code: Baccatin III:3-amino-3-phenylpropanoyltransferase (445 aa).

Belongs to the plant acyltransferase family.

It carries out the reaction (3R)-3-amino-3-phenylpropanoyl-CoA + baccatin III = 3'-N-debenzoyl-2'-deoxytaxol + CoA. The protein operates within alkaloid biosynthesis; taxol biosynthesis. Its function is as follows. Acyltransferase involved in taxol biosynthesis. Catalyzes the selective 13-O-acylation of baccatin III with (3R)-3-amino-3-phenylpropanoyl-CoA as the acyl donor to form 3'-N-debenzoyl-2'-deoxytaxol. The polypeptide is Baccatin III:3-amino-3-phenylpropanoyltransferase (Taxus cuspidata (Japanese yew)).